Here is a 363-residue protein sequence, read N- to C-terminus: N-acetylmuramate/N-acetylglucosamine kinase (363 aa).

The protein belongs to the kinase AmgK family.

It catalyses the reaction N-acetyl-D-muramate + ATP = N-acetyl-alpha-D-muramate 1-phosphate + ADP + H(+). It carries out the reaction N-acetyl-D-glucosamine + ATP = N-acetyl-alpha-D-glucosamine 1-phosphate + ADP + H(+). Its pathway is cell wall biogenesis; peptidoglycan recycling. Its function is as follows. Sugar kinase that catalyzes the ATP-dependent phosphorylation of N-acetylmuramate (MurNAc) and N-acetylglucosamine (GlcNAc) at its C1 hydroxyl group, leading to MurNAc alpha-1P and GlcNAc alpha-1P, respectively. Is likely involved in peptidoglycan recycling as part of a cell wall recycling pathway that bypasses de novo biosynthesis of the peptidoglycan precursor UDP-MurNAc. Is able to complement the fosfomycin sensitivity phenotype of a P.putida mutant lacking amgK. The sequence is that of N-acetylmuramate/N-acetylglucosamine kinase from Caulobacter vibrioides (strain ATCC 19089 / CIP 103742 / CB 15) (Caulobacter crescentus).